Consider the following 355-residue polypeptide: MRLSSSLIALVALAGQALALPFNELAERDTGLDVKLIPIGNTRVKAIITNNADHEMSFVKYNTLFDSSPVRKVQISKDGSIIPFKGIHLYYDIDNLPKEAYKTLAPGASAEAEFDIAETSDLSAGGSFKISAEGSIPVIDGQGTKPTSSIRFKANTLTMDIDGEMASRVASAIPELNKRTRVDNQTCTGQYAQLLQGGLRTCATYAQRAAQAASGGNAQKFQEYFKTTNQQTRQNVARRFQAIAQECSSANQGRTIYFCQDVYGYCQGAIAYTVPDRSHVVNCPAYWSLPPVLNRGLGPDHGYVIVHEFTHAPSVFSPGTVDHAYGYEQCRRLNAQQSLNNADSYSLFAADVSRN.

The first 19 residues, 1 to 19 (MRLSSSLIALVALAGQALA), serve as a signal peptide directing secretion. Positions 20–179 (LPFNELAERD…ASAIPELNKR (160 aa)) are excised as a propeptide. Intrachain disulfides connect cysteine 187–cysteine 259 and cysteine 266–cysteine 283. Histidine 307 serves as a coordination point for Zn(2+). The active site involves glutamate 308. Residues histidine 311 and aspartate 322 each coordinate Zn(2+).

Belongs to the peptidase M35 family. It depends on Zn(2+) as a cofactor.

It is found in the secreted. It carries out the reaction Preferential cleavage of bonds with hydrophobic residues in P1'. Also 3-Asn-|-Gln-4 and 8-Gly-|-Ser-9 bonds in insulin B chain.. Its function is as follows. Secreted metalloproteinase that allows assimilation of proteinaceous substrates. Shows high activities on basic nuclear substrates such as histone and protamine. May be involved in virulence. The polypeptide is Neutral protease 2 homolog MEP6 (MEP6) (Coccidioides posadasii (strain C735) (Valley fever fungus)).